We begin with the raw amino-acid sequence, 148 residues long: Ubiquitin-conjugating enzyme E2 8 (148 aa).

The 147-residue stretch at 1–147 (MASKRILKEL…ARNWTQKYAM (147 aa)) folds into the UBC core domain. The Glycyl thioester intermediate role is filled by C85.

This sequence belongs to the ubiquitin-conjugating enzyme family. As to quaternary structure, interacts with CIP8, CHIP, NLA and XERICO. In terms of tissue distribution, highest expression in young stems, old leaves. Lowest levels in floral buds, anthers and young leaves.

The enzyme catalyses S-ubiquitinyl-[E1 ubiquitin-activating enzyme]-L-cysteine + [E2 ubiquitin-conjugating enzyme]-L-cysteine = [E1 ubiquitin-activating enzyme]-L-cysteine + S-ubiquitinyl-[E2 ubiquitin-conjugating enzyme]-L-cysteine.. Its pathway is protein modification; protein ubiquitination. Its function is as follows. Accepts the ubiquitin from the E1 complex and catalyzes its covalent attachment to other proteins. Mediates the selective degradation of short-lived and abnormal proteins. The protein is Ubiquitin-conjugating enzyme E2 8 (UBC8) of Arabidopsis thaliana (Mouse-ear cress).